We begin with the raw amino-acid sequence, 397 residues long: Mannonate dehydratase (397 aa).

It belongs to the mannonate dehydratase family. It depends on Fe(2+) as a cofactor. Requires Mn(2+) as cofactor.

The enzyme catalyses D-mannonate = 2-dehydro-3-deoxy-D-gluconate + H2O. It functions in the pathway carbohydrate metabolism; pentose and glucuronate interconversion. Catalyzes the dehydration of D-mannonate. This is Mannonate dehydratase from Yersinia pseudotuberculosis serotype O:1b (strain IP 31758).